The sequence spans 517 residues: MSELKLPSIDYVALAPTLILLGAALVGVLVEAFVPRRLRHMVQLTVAMLAVLSALTMVVVNANDRLITIGGAIAVDGPALFLQGAILVLAAMALLLIGERSVERGGAFVAQAAVTAESADDRRQAEGRPGATEVYPLTSFAVGGMLIFVAANDLLTMFIALEVLSLPLYLLCALARRRRLLSQEAAMKYFLLGAYASAFFLFGVALVYGYTAGVPDRAAGVDFATIDAAVSESQSSSVLLFGGMALIAIGLLFKAAAAPFHVWTPDVYQGAPTPITGFMAACTKVAAFGALLRVFHVAFEGARWDFTPILGVVAVLTMLVGAVLAVTQTDIKRLLAYSSIANAGYLLVGVLAPSSEGVSGTMFYLVAYGFSVLAAFAVVTLVRDGDGEATHLSRWAGLGQRSPFYAGLFTFILLAFAGIPLTSGFTSKFAVFSAAFDGGQGWLVVAGVLTSMVLAFPYLRVVVLMWLSEPGESTPAVVMPGWLTSAALTIGVVATLVLGVVPQPLLDLAAGAAEFVR.

The next 14 membrane-spanning stretches (helical) occupy residues 14–34 (LAPT…EAFV), 40–60 (HMVQ…MVVV), 77–97 (GPAL…LLLI), 131–151 (ATEV…FVAA), 154–174 (LLTM…LCAL), 189–209 (YFLL…LVYG), 238–258 (VLLF…AAAA), 272–292 (PTPI…GALL), 306–326 (FTPI…VLAV), 334–354 (LLAY…LAPS), 362–382 (MFYL…VTLV), 404–424 (FYAG…LTSG), 451–471 (SMVL…SEPG), and 481–501 (GWLT…LGVV).

Belongs to the complex I subunit 2 family. NDH-1 is composed of 14 different subunits. Subunits NuoA, H, J, K, L, M, N constitute the membrane sector of the complex.

Its subcellular location is the cell membrane. It carries out the reaction a quinone + NADH + 5 H(+)(in) = a quinol + NAD(+) + 4 H(+)(out). Functionally, NDH-1 shuttles electrons from NADH, via FMN and iron-sulfur (Fe-S) centers, to quinones in the respiratory chain. The immediate electron acceptor for the enzyme in this species is believed to be a menaquinone. Couples the redox reaction to proton translocation (for every two electrons transferred, four hydrogen ions are translocated across the cytoplasmic membrane), and thus conserves the redox energy in a proton gradient. The polypeptide is NADH-quinone oxidoreductase subunit N (Salinispora arenicola (strain CNS-205)).